Here is a 320-residue protein sequence, read N- to C-terminus: MASSLQSKWICLRLNDAIIKRHVLVLSEYADLKYLGFEKYKFFEYVIFQFCNDPQLCKIIENNYNYCMQIFKAPADDMRDIRHNIKRAFKTPVLGHMCVLSNKPPMYSFLKEWFLLPHYKVVSLKSESLTWGFPHVVVFDLDSTLITEEEQVEIRDPFVYDSLQELHEMGCVLVLWSYGSRDHVAHSMRDVDLEGYFDIIISEGSTVQEERSDLVQNSHNAIVDYNLKKRFIENKFVFDIHNHRSDNNIPKSPKIVIKYLSDKNVNFFKSITLVDDLPTNNYAYDFYVKVKRCPTPVQDWEHYHNEIIQNIMDYEQYFIK.

As to quaternary structure, interacts with VP1054, VP39 and VP80.

The protein localises to the virion. It is found in the host nucleus. It localises to the host cytoplasm. Functionally, plays a role in nucleocapsid assembly and is essential for viral replication. Distributed over the cylindrical capsid sheath of nucleocapsid. This is an uncharacterized protein from Lepidoptera (butterflies and moths).